We begin with the raw amino-acid sequence, 1226 residues long: Methionine synthase (1226 aa).

A Hcy-binding domain is found at Arg6–Val326. Residues Cys248, Cys311, and Cys312 each coordinate Zn(2+). The 262-residue stretch at Phe357 to Glu618 folds into the Pterin-binding domain. A B12-binding N-terminal domain is found at Ser651–Thr745. Residues Glu695, Gly757 to Asp761, His760, Ser805, Thr809, and Ala861 each bind methylcob(III)alamin. The B12-binding domain occupies Asn747–Glu882. An AdoMet activation domain is found at Lys898–Ala1226. Residues Asp948, Arg1136, and Tyr1191–Phe1192 contribute to the S-adenosyl-L-methionine site.

This sequence belongs to the vitamin-B12 dependent methionine synthase family. Methylcob(III)alamin serves as cofactor. The cofactor is Zn(2+).

The enzyme catalyses (6S)-5-methyl-5,6,7,8-tetrahydrofolate + L-homocysteine = (6S)-5,6,7,8-tetrahydrofolate + L-methionine. Its pathway is amino-acid biosynthesis; L-methionine biosynthesis via de novo pathway; L-methionine from L-homocysteine (MetH route): step 1/1. In terms of biological role, catalyzes the transfer of a methyl group from methyl-cobalamin to homocysteine, yielding enzyme-bound cob(I)alamin and methionine. Subsequently, remethylates the cofactor using methyltetrahydrofolate. In Vibrio cholerae serotype O1 (strain ATCC 39315 / El Tor Inaba N16961), this protein is Methionine synthase (metH).